We begin with the raw amino-acid sequence, 132 residues long: Small ribosomal subunit protein uS8 (132 aa).

The protein belongs to the universal ribosomal protein uS8 family. Part of the 30S ribosomal subunit. Contacts proteins S5 and S12.

One of the primary rRNA binding proteins, it binds directly to 16S rRNA central domain where it helps coordinate assembly of the platform of the 30S subunit. This is Small ribosomal subunit protein uS8 from Corynebacterium jeikeium (strain K411).